The sequence spans 373 residues: Chemerin-like receptor 1 (373 aa).

Residues 1–41 (MRMEDEDYNTSISYGDEYPDYLDSIVVLEDLSPLEARVTRI) are Extracellular-facing. A glycan (N-linked (GlcNAc...) asparagine) is linked at Asn-9. The helical transmembrane segment at 42 to 64 (FLVVVYSIVCFLGILGNGLVIII) threads the bilayer. Topologically, residues 65–75 (ATFKMKKTVNM) are cytoplasmic. A helical membrane pass occupies residues 76 to 97 (VWFLNLAVADFLFNVFLPIHIT). Residues 98–114 (YAAMDYHWVFGTAMCKI) are Extracellular-facing. A disulfide bridge links Cys-112 with Cys-189. The chain crosses the membrane as a helical span at residues 115–135 (SNFLLIHNMFTSVFLLTIISS). Over 136–154 (DRCISVLLPVWSQNHRSVR) the chain is Cytoplasmic. A helical membrane pass occupies residues 155–176 (LAYMACMVIWVLAFFLSSPSLV). Residues 177–224 (FRDTANLHGKISCFNNFSLSTPGSSSWPTHSQMDPVGYSRHMVVTVTR) lie on the Extracellular side of the membrane. N-linked (GlcNAc...) asparagine glycosylation is present at Asn-192. A helical transmembrane segment spans residues 225 to 245 (FLCGFLVPVLIITACYLTIVC). The Cytoplasmic portion of the chain corresponds to 246–261 (KLQRNRLAKTKKPFKI). Residues 262–282 (IVTIIITFFLCWCPYHTLNLL) traverse the membrane as a helical segment. Over 283–300 (ELHHTAMPGSVFSLGLPL) the chain is Extracellular. The helical transmembrane segment at 301-320 (ATALAIANSCMNPILYVFMG) threads the bilayer. Residues 321–373 (QDFKKFKVALFSRLVNALSEDTGHSSYPSHRSFTKMSSMNERTSMNERETGML) are Cytoplasmic-facing. A Phosphoserine modification is found at Ser-339. Positions 341-373 (DTGHSSYPSHRSFTKMSSMNERTSMNERETGML) are disordered. Position 342 is a phosphothreonine (Thr-342). Positions 344 to 363 (HSSYPSHRSFTKMSSMNERT) are enriched in polar residues. Phosphoserine occurs at positions 349, 352, and 358. Over residues 364–373 (SMNERETGML) the composition is skewed to basic and acidic residues.

This sequence belongs to the chemokine-like receptor (CMKLR) family. In terms of tissue distribution, prominently expressed in developing osseous and cartilaginous tissue. Also found in adult parathyroid glands. Expressed in cardiovascular system, brain, kidney, gastrointestinal tissues and myeloid tissues. Expressed in a broad array of tissues associated with hematopoietic and immune function including, spleen, thymus, appendix, lymph node, bone marrow and fetal liver. Among leukocyte populations abundant expression in monocyte-derived macrophage and immature dendritic cells (DCs). High expression in blood monocytes and low levels in polymorphonuclear cells and T-cells. Expressed on endothelial cells. Highly expressed in differentiating adipocytes.

It is found in the cell membrane. Its function is as follows. Receptor for the chemoattractant adipokine chemerin/RARRES2 and for the omega-3 fatty acid derived molecule resolvin E1. Interaction with RARRES2 initiates activation of G proteins G(i)/G(o) and beta-arrestin pathways inducing cellular responses via second messenger pathways such as intracellular calcium mobilization, phosphorylation of MAP kinases MAPK1/MAPK3 (ERK1/2), TYRO3, MAPK14/P38MAPK and PI3K leading to multifunctional effects, like reduction of immune responses, enhancing of adipogenesis and angionesis. Resolvin E1 down-regulates cytokine production in macrophages by reducing the activation of MAPK1/3 (ERK1/2) and NF-kappa-B. Positively regulates adipogenesis and adipocyte metabolism. (Microbial infection) Acts as a coreceptor for several SIV strains (SIVMAC316, SIVMAC239, SIVMACL7E-FR and SIVSM62A), as well as a primary HIV-1 strain (92UG024-2). In Homo sapiens (Human), this protein is Chemerin-like receptor 1.